The chain runs to 70 residues: Drosomycin (70 aa).

The first 20 residues, 1-20, serve as a signal peptide directing secretion; sequence MMQIKYLFALFAVLMLVVLG. A propeptide spanning residues 21-26 is cleaved from the precursor; it reads ANEADA. 4 disulfides stabilise this stretch: Cys28/Cys70, Cys37/Cys59, Cys45/Cys65, and Cys49/Cys67. Asn42 carries N-linked (GlcNAc...) asparagine glycosylation.

Hemolymph (at protein level). Synthesized in the fat body and is secreted into the blood. In larvae, expressed in the visceral branches and posterior spiracles of the trachea.

The protein localises to the secreted. Functionally, possesses antifungal activity and is active against a relatively broad spectrum of filamentous fungi. It inhibits spore germination at high concentrations and at low concentrations delays growth of hyphae which subsequently exhibit abnormal morphology. Spz C-106 in the hemolymph controls expression of the antifungal peptide by acting as a ligand of Tl and inducing an intracellular signaling pathway. Part of a psh-dependent Toll pathway, which may function in activating the systematic immune response in response to localized melanization of the tracheal system. The sequence is that of Drosomycin (Drs) from Drosophila melanogaster (Fruit fly).